The following is a 210-amino-acid chain: Phosphoheptose isomerase (210 aa).

The 165-residue stretch at 38 to 202 (IAACLARGGK…ENVAALAPYL (165 aa)) folds into the SIS domain. 53–55 (NGG) is a binding site for substrate. 2 residues coordinate Zn(2+): His62 and Glu66. Substrate contacts are provided by residues Glu66, 95–96 (ND), 121–123 (STS), Ser126, and Gln173. 2 residues coordinate Zn(2+): Gln173 and His181.

This sequence belongs to the SIS family. GmhA subfamily. In terms of assembly, homotetramer. It depends on Zn(2+) as a cofactor.

It localises to the cytoplasm. The catalysed reaction is 2 D-sedoheptulose 7-phosphate = D-glycero-alpha-D-manno-heptose 7-phosphate + D-glycero-beta-D-manno-heptose 7-phosphate. The protein operates within carbohydrate biosynthesis; D-glycero-D-manno-heptose 7-phosphate biosynthesis; D-glycero-alpha-D-manno-heptose 7-phosphate and D-glycero-beta-D-manno-heptose 7-phosphate from sedoheptulose 7-phosphate: step 1/1. In terms of biological role, catalyzes the isomerization of sedoheptulose 7-phosphate in D-glycero-D-manno-heptose 7-phosphate. The sequence is that of Phosphoheptose isomerase from Desulfovibrio desulfuricans (strain ATCC 27774 / DSM 6949 / MB).